Here is a 748-residue protein sequence, read N- to C-terminus: Cysteine--tRNA ligase, cytoplasmic (748 aa).

Positions 1–25 (MAGSSGQQGKGRRVQPQWSPPAGTQ) are disordered. Ala2 bears the N-acetylalanine mark. Ser19 bears the Phosphoserine mark. Cys55 provides a ligand contact to Zn(2+). Gly56 contributes to the L-cysteine binding site. The short motif at 57–67 (PTVYDASHMGH) is the 'HIGH' region element. Thr96 lines the L-cysteine pocket. The 'KIIK' region signature appears at 101–104 (KIIK). 2 positions are modified to phosphoserine: Ser305 and Ser307. 3 residues coordinate Zn(2+): Cys348, His373, and Glu377. An L-cysteine-binding site is contributed by His373. The short motif at 406–410 (KMSKS) is the 'KMSKS' region element. Residue Lys409 coordinates ATP. 2 stretches are compositionally biased toward basic and acidic residues: residues 654–679 (KRQVEEEKRKKKEEAARRKQEQEAAK) and 700–717 (KFDENGLPTHDAEGKELS). Disordered regions lie at residues 654 to 686 (KRQVEEEKRKKKEEAARRKQEQEAAKLAKMKIP) and 700 to 721 (KFDENGLPTHDAEGKELSKGQA). Ser746 carries the post-translational modification Phosphoserine.

As to quaternary structure, homodimer. The cofactor is Zn(2+).

Its subcellular location is the cytoplasm. The enzyme catalyses tRNA(Cys) + L-cysteine + ATP = L-cysteinyl-tRNA(Cys) + AMP + diphosphate. Its function is as follows. Catalyzes the ATP-dependent ligation of cysteine to tRNA(Cys). The polypeptide is Cysteine--tRNA ligase, cytoplasmic (CARS1) (Macaca fascicularis (Crab-eating macaque)).